We begin with the raw amino-acid sequence, 229 residues long: Small ribosomal subunit protein mS23 (229 aa).

The protein belongs to the mitochondrion-specific ribosomal protein mS23 family. Component of the mitochondrial small ribosomal subunit.

It is found in the mitochondrion. The sequence is that of Small ribosomal subunit protein mS23 (RSM25) from Yarrowia lipolytica (strain CLIB 122 / E 150) (Yeast).